The chain runs to 117 residues: Mediator of RNA polymerase II transcription subunit 11 (117 aa).

At alanine 2 the chain carries N-acetylalanine.

Belongs to the Mediator complex subunit 11 family. Component of the Mediator complex, which is composed of MED1, MED4, MED6, MED7, MED8, MED9, MED10, MED11, MED12, MED13, MED13L, MED14, MED15, MED16, MED17, MED18, MED19, MED20, MED21, MED22, MED23, MED24, MED25, MED26, MED27, MED29, MED30, MED31, CCNC, CDK8 and CDC2L6/CDK11. The MED12, MED13, CCNC and CDK8 subunits form a distinct module termed the CDK8 module. Mediator containing the CDK8 module is less active than Mediator lacking this module in supporting transcriptional activation. Individual preparations of the Mediator complex lacking one or more distinct subunits have been variously termed ARC, CRSP, DRIP, PC2, SMCC and TRAP.

Its subcellular location is the nucleus. Its function is as follows. Component of the Mediator complex, a coactivator involved in the regulated transcription of nearly all RNA polymerase II-dependent genes. Mediator functions as a bridge to convey information from gene-specific regulatory proteins to the basal RNA polymerase II transcription machinery. Mediator is recruited to promoters by direct interactions with regulatory proteins and serves as a scaffold for the assembly of a functional pre-initiation complex with RNA polymerase II and the general transcription factors. This is Mediator of RNA polymerase II transcription subunit 11 (MED11) from Bos taurus (Bovine).